Reading from the N-terminus, the 344-residue chain is DNA-directed RNA polymerase subunit alpha (344 aa).

An alpha N-terminal domain (alpha-NTD) region spans residues 1–246 (MPVEKFLKDF…EFLFPLIDFE (246 aa)). An alpha C-terminal domain (alpha-CTD) region spans residues 259–344 (ESSNLLDMSI…VLSKNVKISE (86 aa)).

The protein belongs to the RNA polymerase alpha chain family. As to quaternary structure, homodimer. The RNAP catalytic core consists of 2 alpha, 1 beta, 1 beta' and 1 omega subunit. When a sigma factor is associated with the core the holoenzyme is formed, which can initiate transcription.

The enzyme catalyses RNA(n) + a ribonucleoside 5'-triphosphate = RNA(n+1) + diphosphate. Functionally, DNA-dependent RNA polymerase catalyzes the transcription of DNA into RNA using the four ribonucleoside triphosphates as substrates. The polypeptide is DNA-directed RNA polymerase subunit alpha (Borrelia garinii subsp. bavariensis (strain ATCC BAA-2496 / DSM 23469 / PBi) (Borreliella bavariensis)).